Consider the following 490-residue polypeptide: ATP synthase subunit beta, chloroplastic (490 aa).

170–177 (GGAGVGKT) lines the ATP pocket.

Belongs to the ATPase alpha/beta chains family. In terms of assembly, F-type ATPases have 2 components, CF(1) - the catalytic core - and CF(0) - the membrane proton channel. CF(1) has five subunits: alpha(3), beta(3), gamma(1), delta(1), epsilon(1). CF(0) has four main subunits: a(1), b(1), b'(1) and c(9-12).

It localises to the plastid. The protein localises to the chloroplast thylakoid membrane. It catalyses the reaction ATP + H2O + 4 H(+)(in) = ADP + phosphate + 5 H(+)(out). In terms of biological role, produces ATP from ADP in the presence of a proton gradient across the membrane. The catalytic sites are hosted primarily by the beta subunits. The protein is ATP synthase subunit beta, chloroplastic of Ipomoea wrightii (Wright's morning glory).